The following is a 382-amino-acid chain: Putative acetyl-CoA C-acetyltransferase VraB (382 aa).

Cys86 (acyl-thioester intermediate) is an active-site residue. His338 (proton acceptor) is an active-site residue.

This sequence belongs to the thiolase-like superfamily. Thiolase family.

The protein is Putative acetyl-CoA C-acetyltransferase VraB (vraB) of Staphylococcus epidermidis (strain ATCC 12228 / FDA PCI 1200).